A 316-amino-acid polypeptide reads, in one-letter code: Cell division protein ZipA (316 aa).

Residues 1-5 (MQELR) lie on the Periplasmic side of the membrane. A helical transmembrane segment spans residues 6 to 26 (FVLIVVGALAIAALLFHGLWS). Residues 27 to 316 (SKKEGKAKFG…QIVEFNAANA (290 aa)) are Cytoplasmic-facing. Positions 36–65 (GNKPLGKLDVDQGDKDSVEQERSFAPATED) are disordered. Basic and acidic residues predominate over residues 41-57 (GKLDVDQGDKDSVEQER).

It belongs to the ZipA family. Interacts with FtsZ via their C-terminal domains.

The protein localises to the cell inner membrane. Functionally, essential cell division protein that stabilizes the FtsZ protofilaments by cross-linking them and that serves as a cytoplasmic membrane anchor for the Z ring. Also required for the recruitment to the septal ring of downstream cell division proteins. This chain is Cell division protein ZipA, found in Vibrio parahaemolyticus serotype O3:K6 (strain RIMD 2210633).